The primary structure comprises 93 residues: DNA-binding protein Fis (93 aa).

The segment at residues 74-93 (QTRAAQMMGINRGTLRKKLK) is a DNA-binding region (H-T-H motif).

It belongs to the transcriptional regulatory Fis family. Homodimer.

Its function is as follows. Activates ribosomal RNA transcription. Plays a direct role in upstream activation of rRNA promoters. The sequence is that of DNA-binding protein Fis from Proteus vulgaris.